We begin with the raw amino-acid sequence, 424 residues long: Alkaline nuclease (424 aa).

It belongs to the baculo-herpesviridae alkaline nuclease family. Interacts with LEF-3.

It localises to the host nucleus. May play a role in maturation and encapsidation of viral replicated genome, by promoting DNA homologous recombination. Exhibits endonuclease and 5'-&gt;3' exonuclease activities. The endonuclease activity displays a specificity for ssDNA in vitro. The sequence is that of Alkaline nuclease (ALK-EXO) from Orgyia pseudotsugata (Douglas-fir tussock moth).